The primary structure comprises 94 residues: NADH-ubiquinone oxidoreductase 10.5 kDa subunit (94 aa).

This sequence belongs to the complex I NDUFA2 subunit family. In terms of assembly, complex I is composed of about 40 different subunits.

It is found in the mitochondrion inner membrane. Its function is as follows. Accessory subunit of the mitochondrial membrane respiratory chain NADH dehydrogenase (Complex I), that is believed not to be involved in catalysis. Complex I functions in the transfer of electrons from NADH to the respiratory chain. The immediate electron acceptor for the enzyme is believed to be ubiquinone. In Neurospora crassa (strain ATCC 24698 / 74-OR23-1A / CBS 708.71 / DSM 1257 / FGSC 987), this protein is NADH-ubiquinone oxidoreductase 10.5 kDa subunit (nuo-10.5).